The sequence spans 482 residues: UDP-sulfoquinovose synthase, chloroplastic (482 aa).

A chloroplast-targeting transit peptide spans 1-61 (MAHLLSTSCS…NNTQKLTVVR (61 aa)). NAD(+) is bound by residues 100-101 (YC), 120-124 (DNLVR), 163-164 (DI), Arg-189, and Asn-207. Arg-189 serves as a coordination point for substrate. Positions 233 and 270 each coordinate substrate. Residue Thr-233 is part of the active site. 2 residues coordinate NAD(+): Tyr-270 and Lys-274. Tyr-270 serves as the catalytic Proton acceptor. Residue Lys-274 is part of the active site. Residue Gln-297 participates in substrate binding. Val-300 lines the NAD(+) pocket. Residues 327–330 (ALNR), 342–344 (TVY), and 415–417 (RVE) contribute to the substrate site.

The protein belongs to the NAD(P)-dependent epimerase/dehydratase family. As to quaternary structure, homodimer. Interacts with FdGOGAT (via FMN-binding domain). The cofactor is NAD(+). In terms of processing, the N-terminus is blocked.

The protein localises to the plastid. Its subcellular location is the chloroplast stroma. The catalysed reaction is sulfite + UDP-alpha-D-glucose + H(+) = UDP-alpha-D-6-sulfoquinovose + H2O. Functionally, involved in the biosynthesis of sulfolipids found in thylakoid membranes. Converts UDP-glucose and sulfite to the sulfolipid head group precursor UDP-sulfoquinovose. The sulfite is delivered to the reaction center by the FMN-binding domain of FdGOGAT. This is UDP-sulfoquinovose synthase, chloroplastic (SQD1) from Spinacia oleracea (Spinach).